Reading from the N-terminus, the 445-residue chain is Alkylglycerol monooxygenase (445 aa).

2 helical membrane passes run 43–63 and 111–131; these read ATPF…ILKG and WDSP…YYWF. The Fatty acid hydroxylase domain maps to 120–249; that stretch reads AFLGVDFGYY…LIIWDKIFGT (130 aa). The short motif at 132 to 136 is the Histidine box-1 element; the sequence is HRMAH. The short motif at 145-149 is the Histidine box-2 element; that stretch reads HQTHH. A Histidine box-3 motif is present at residues 221 to 225; sequence HRVHH. Transmembrane regions (helical) follow at residues 334 to 354, 363 to 383, and 413 to 433; these read LLKI…EETF, VTLL…GFLL, and VPSL…FWGV.

The protein belongs to the sterol desaturase family. TMEM195 subfamily. It depends on Fe cation as a cofactor.

The protein resides in the endoplasmic reticulum membrane. It catalyses the reaction 1-O-(1,2-saturated-alkyl)-sn-glycerol + (6R)-L-erythro-5,6,7,8-tetrahydrobiopterin + O2 = a 1-(1-hydroxyalkyl)-sn-glycerol + (6R)-L-erythro-6,7-dihydrobiopterin + H2O. Its function is as follows. Glyceryl-ether monooxygenase that cleaves the O-alkyl bond of ether lipids. Ether lipids are essential components of brain membranes. This chain is Alkylglycerol monooxygenase (AGMO), found in Homo sapiens (Human).